A 311-amino-acid polypeptide reads, in one-letter code: L-lactate dehydrogenase 2 (311 aa).

Residues Val14, Asp35, and Arg40 each contribute to the NAD(+) site. A substrate-binding site is contributed by Arg90. NAD(+) contacts are provided by residues Ser103, 120–122, and Thr145; that span reads ATN. 122–125 serves as a coordination point for substrate; sequence NPCD. 150 to 153 contacts substrate; that stretch reads DTTR. The active-site Proton acceptor is the His177. Thr230 lines the substrate pocket.

The protein belongs to the LDH/MDH superfamily. LDH family. Homotetramer.

The protein resides in the cytoplasm. The enzyme catalyses (S)-lactate + NAD(+) = pyruvate + NADH + H(+). It functions in the pathway fermentation; pyruvate fermentation to lactate; (S)-lactate from pyruvate: step 1/1. Functionally, catalyzes the conversion of lactate to pyruvate. In Listeria monocytogenes serotype 4b (strain F2365), this protein is L-lactate dehydrogenase 2.